Consider the following 208-residue polypeptide: Translation initiation factor 2 subunit beta (208 aa).

Residues 144–202 form the TRAM domain; sequence GIEEGKEYTVEISEVGSSGEGRASFRGFTIFVPGTKKGETVKVKIKKIKNDVAIAEVVS.

This sequence belongs to the eIF-2-beta/eIF-5 family. Heterotrimer composed of an alpha, a beta and a gamma chain.

EIF-2 functions in the early steps of protein synthesis by forming a ternary complex with GTP and initiator tRNA. This chain is Translation initiation factor 2 subunit beta (eif2b), found in Thermoplasma volcanium (strain ATCC 51530 / DSM 4299 / JCM 9571 / NBRC 15438 / GSS1).